A 420-amino-acid chain; its full sequence is Pyridinium-3,5-bisthiocarboxylic acid mononucleotide nickel insertion protein (420 aa).

Residues 81–104 (NHEHKHNHHEIKNDEPAHSHEHHH) form a disordered region. Residues 90 to 99 (EIKNDEPAHS) show a composition bias toward basic and acidic residues.

It belongs to the LarC family.

The enzyme catalyses Ni(II)-pyridinium-3,5-bisthiocarboxylate mononucleotide = pyridinium-3,5-bisthiocarboxylate mononucleotide + Ni(2+). Its function is as follows. Involved in the biosynthesis of a nickel-pincer cofactor ((SCS)Ni(II) pincer complex). Binds Ni(2+), and functions in nickel delivery to pyridinium-3,5-bisthiocarboxylic acid mononucleotide (P2TMN), to form the mature cofactor. Is thus probably required for the activation of nickel-pincer cofactor-dependent enzymes. The polypeptide is Pyridinium-3,5-bisthiocarboxylic acid mononucleotide nickel insertion protein (Clostridium acetobutylicum (strain ATCC 824 / DSM 792 / JCM 1419 / IAM 19013 / LMG 5710 / NBRC 13948 / NRRL B-527 / VKM B-1787 / 2291 / W)).